A 422-amino-acid chain; its full sequence is Receptor homology region, transmembrane domain- and RING domain-containing protein 3 (422 aa).

Residues 1–22 form the signal peptide; that stretch reads MNLVVLLILTLLLFIVSYVVDA. At 23–168 the chain is on the lumenal side; it reads GQVILVDSNI…NTEDSVWSLY (146 aa). N31 carries N-linked (GlcNAc...) asparagine glycosylation. C64 and C89 are disulfide-bonded. Positions 81–146 constitute a PA domain; the sequence is LVLIIRGGCS…RAGEMLKKYA (66 aa). Residues 169–189 form a helical membrane-spanning segment; the sequence is ASIALILSLAIFCVMVTCVFF. Over 190–422 the chain is Cytoplasmic; it reads YRYCSTIRNS…HFASAHSLPD (233 aa). Residues 232–274 form an RING-type; atypical zinc finger; the sequence is CAICLEDYIVGDKLRVLPCSHKFHVACVDSWLISWRTFCPVCK. Positions 344 to 368 are disordered; it reads LRRQASPLQSSSQRSHLSMKSSHSL. The segment covering 349-368 has biased composition (polar residues); the sequence is SPLQSSSQRSHLSMKSSHSL.

The protein localises to the prevacuolar compartment membrane. It is found in the protein storage vacuole membrane. Its function is as follows. Involved in the trafficking of vacuolar proteins. May function as a sorting receptor for protein trafficking to the protein storage vacuole (PSV). The sequence is that of Receptor homology region, transmembrane domain- and RING domain-containing protein 3 (RMR3) from Arabidopsis thaliana (Mouse-ear cress).